The chain runs to 378 residues: MGVLRLLVLCTLAACCVARSPPAPPLPNAPFAPLRPLGCNDSEVLAVAGFALQNINRVQKDGYMLTLNRVHDARVHRQEDMGSLFYLMLDVLETGCHVLSRKALKDCGPRIFYETVHGQCKAMFHVNKPRRVLYLPAYNCTLRPVSKRKIHSMCPDCPHPVDLSAPSVLEAATESLAKFNSENPSKQYALVKVTKATTQWVVGPSYFVEYLIKESPCTQSQDSCSLQASDSEPVGLCQGSLIKSPGVPPQRFKKTVTVSCEFFESQDQVPGGENPADTQDAKKLPQKNTAPTSSPSITAPRGSIQHLPEQEEPEDSKGKSPEEPFPVQLDLTTNPQGDTLDVSFLYLEPEEKKLVVLPFPGKEQRSPECPGPEKQRTP.

A signal peptide spans Met1–Ala18. Cystatin fetuin-B-type domains are found at residues Asn28–Thr141 and Ser152–Glu261. Asn40 is a glycosylation site (N-linked (GlcNAc...) asparagine). Cystine bridges form between Cys96–Cys107, Cys120–Cys140, Cys154–Cys157, Cys217–Cys224, and Cys237–Cys260. An N-linked (GlcNAc...) asparagine glycan is attached at Asn139. Disordered regions lie at residues Gln266–Asp338 and Leu357–Pro378. A compositionally biased stretch (polar residues) spans Gln286 to Ile297. 2 O-linked (GalNAc...) threonine glycosylation sites follow: Thr289 and Thr292. The residue at position 316 (Ser316) is a Phosphoserine. Over residues Lys362–Pro378 the composition is skewed to basic and acidic residues.

It belongs to the fetuin family. Liver.

Its subcellular location is the secreted. Protease inhibitor required for egg fertilization. Required to prevent premature zona pellucida hardening before fertilization, probably by inhibiting the protease activity of ASTL, a protease that mediates the cleavage of ZP2 and triggers zona pellucida hardening. The protein is Fetuin-B (Fetub) of Rattus norvegicus (Rat).